The following is a 187-amino-acid chain: Threonylcarbamoyl-AMP synthase (187 aa).

The 184-residue stretch at 4–187 (TLTLSEAVTA…DARSGHILRL (184 aa)) folds into the YrdC-like domain.

It belongs to the SUA5 family. TsaC subfamily.

It is found in the cytoplasm. The catalysed reaction is L-threonine + hydrogencarbonate + ATP = L-threonylcarbamoyladenylate + diphosphate + H2O. Required for the formation of a threonylcarbamoyl group on adenosine at position 37 (t(6)A37) in tRNAs that read codons beginning with adenine. Catalyzes the conversion of L-threonine, HCO(3)(-)/CO(2) and ATP to give threonylcarbamoyl-AMP (TC-AMP) as the acyladenylate intermediate, with the release of diphosphate. In Xylella fastidiosa (strain 9a5c), this protein is Threonylcarbamoyl-AMP synthase.